Consider the following 253-residue polypeptide: Ubiquinone biosynthesis O-methyltransferase (253 aa).

4 residues coordinate S-adenosyl-L-methionine: Arg41, Gly72, Asp93, and Met136.

This sequence belongs to the methyltransferase superfamily. UbiG/COQ3 family.

It catalyses the reaction a 3-demethylubiquinol + S-adenosyl-L-methionine = a ubiquinol + S-adenosyl-L-homocysteine + H(+). It carries out the reaction a 3-(all-trans-polyprenyl)benzene-1,2-diol + S-adenosyl-L-methionine = a 2-methoxy-6-(all-trans-polyprenyl)phenol + S-adenosyl-L-homocysteine + H(+). The protein operates within cofactor biosynthesis; ubiquinone biosynthesis. In terms of biological role, O-methyltransferase that catalyzes the 2 O-methylation steps in the ubiquinone biosynthetic pathway. The protein is Ubiquinone biosynthesis O-methyltransferase of Chelativorans sp. (strain BNC1).